A 465-amino-acid polypeptide reads, in one-letter code: Beta-1,2-xylosyltransferase XYXT1 (465 aa).

At 1-11 (MKAAVRSKKSK) the chain is on the cytoplasmic side. The chain crosses the membrane as a helical; Signal-anchor for type II membrane protein span at residues 12-32 (GSFCHPPLLLLIVAIQFLVIY). The Lumenal segment spans residues 33 to 465 (SPTLDQYMVM…VLLKALHLLR (433 aa)). N-linked (GlcNAc...) asparagine glycans are attached at residues N80, N118, N125, N266, and N403.

It belongs to the glycosyltransferase 61 family. In terms of tissue distribution, widely expressed.

It is found in the golgi apparatus membrane. The protein operates within glycan metabolism. In terms of biological role, glycosyltransferase involved in the xylosylation of xylan, the major hemicellulose (non-cellulosic component) of primary and secondary walls of angiosperms. Possesses beta-1,2-xylosyltransferase activity, transferring xylose from UDP-xylose to the xylan backbone. Catalyzes the addition of 2-O-xylosyl side chains to the xylan backbone. The sequence is that of Beta-1,2-xylosyltransferase XYXT1 from Oryza sativa subsp. japonica (Rice).